The primary structure comprises 365 residues: 3-dehydroquinate synthase (365 aa).

NAD(+)-binding positions include D75–K80, G109–D113, T133–T134, K146, and K155. Positions 188, 253, and 269 each coordinate Zn(2+).

This sequence belongs to the sugar phosphate cyclases superfamily. Dehydroquinate synthase family. Co(2+) is required as a cofactor. It depends on Zn(2+) as a cofactor. NAD(+) serves as cofactor.

Its subcellular location is the cytoplasm. The enzyme catalyses 7-phospho-2-dehydro-3-deoxy-D-arabino-heptonate = 3-dehydroquinate + phosphate. Its pathway is metabolic intermediate biosynthesis; chorismate biosynthesis; chorismate from D-erythrose 4-phosphate and phosphoenolpyruvate: step 2/7. Functionally, catalyzes the conversion of 3-deoxy-D-arabino-heptulosonate 7-phosphate (DAHP) to dehydroquinate (DHQ). This Corynebacterium glutamicum (strain R) protein is 3-dehydroquinate synthase.